Here is a 416-residue protein sequence, read N- to C-terminus: Cyclic dinucleotide synthase CdnG (416 aa).

Ser-72 contributes to the GTP binding site. Catalysis depends on residues Asp-89, Asp-91, and Asp-140. A GTP-binding site is contributed by Asp-91. Residue Asp-91 participates in Mg(2+) binding. Residues 145–167 (RRRAPKEKEGEIPHAKKGTRSDP) form a disordered region. A compositionally biased stretch (basic and acidic residues) spans 150–167 (KEKEGEIPHAKKGTRSDP). GTP contacts are provided by Lys-236, Ser-253, Glu-305, Arg-306, and Asp-309.

Belongs to the CD-NTase family. G10 subfamily. Requires Mg(2+) as cofactor.

It catalyses the reaction UTP + GTP = 3',3'-cGMP-UMP + 2 diphosphate. It carries out the reaction GTP + ATP = 3',3'-cGAMP + 2 diphosphate. The catalysed reaction is 2 ATP = 3',3'-c-di-AMP + 2 diphosphate. Its function is as follows. Cyclic nucleotide synthase (second messenger synthase) of a CBASS antivirus system. CBASS (cyclic oligonucleotide-based antiphage signaling system) provides immunity against bacteriophage. The CD-NTase protein synthesizes cyclic nucleotides in response to infection; these serve as specific second messenger signals. The signals activate a diverse range of effectors, leading to bacterial cell death and thus abortive phage infection. A type II-short CBASS system. Functionally, cyclic dinucleotide synthase that catalyzes the synthesis of predominantly 3'3'-cGMP-UMP, followed by 3'3'-cGAMP and c-di-AMP in a reaction mixture of ATP, CTP, GTP and UTP. The cyclic nucleotide products are second messengers that activate the CBASS Cap5 effector nuclease, leading to DNA degradation and probably cell death. Cyclic nucleotides do not activate the effector equally; reactions with ATP/GTP, ATP/UTP and ATP alone activate Cap5, whereas reaction with GTP/UTP (the major in vitro product) do not. This chain is Cyclic dinucleotide synthase CdnG, found in Bradyrhizobium diazoefficiens (strain JCM 10833 / BCRC 13528 / IAM 13628 / NBRC 14792 / USDA 110).